The chain runs to 400 residues: Tryptophan synthase beta chain (400 aa).

N6-(pyridoxal phosphate)lysine is present on lysine 92.

Belongs to the TrpB family. In terms of assembly, tetramer of two alpha and two beta chains. Requires pyridoxal 5'-phosphate as cofactor.

It carries out the reaction (1S,2R)-1-C-(indol-3-yl)glycerol 3-phosphate + L-serine = D-glyceraldehyde 3-phosphate + L-tryptophan + H2O. It participates in amino-acid biosynthesis; L-tryptophan biosynthesis; L-tryptophan from chorismate: step 5/5. Its function is as follows. The beta subunit is responsible for the synthesis of L-tryptophan from indole and L-serine. This Chromobacterium violaceum (strain ATCC 12472 / DSM 30191 / JCM 1249 / CCUG 213 / NBRC 12614 / NCIMB 9131 / NCTC 9757 / MK) protein is Tryptophan synthase beta chain.